Reading from the N-terminus, the 189-residue chain is Elongation factor P (189 aa).

This sequence belongs to the elongation factor P family.

The protein resides in the cytoplasm. It participates in protein biosynthesis; polypeptide chain elongation. Functionally, involved in peptide bond synthesis. Stimulates efficient translation and peptide-bond synthesis on native or reconstituted 70S ribosomes in vitro. Probably functions indirectly by altering the affinity of the ribosome for aminoacyl-tRNA, thus increasing their reactivity as acceptors for peptidyl transferase. This Onion yellows phytoplasma (strain OY-M) protein is Elongation factor P.